The primary structure comprises 371 residues: Barbiturase 1 (371 aa).

An RU A region spans residues 1–103 (MPDAIEVRKV…TIFATVPPED (103 aa)). Residues arginine 53 and 82 to 83 (SG) each bind substrate. The RU B stretch occupies residues 115-250 (RLTVGFAMSE…AQVVVVGNAP (136 aa)). Residue lysine 165 is part of the active site. Residues asparagine 197 and 233–234 (SS) each bind substrate. Serine 233 (nucleophile) is an active-site residue. Positions 256-371 (YRIGHSVMKD…GPVAAIVDLG (116 aa)) are RU C. Position 304 (glutamate 304) interacts with Mg(2+). Residues lysine 331 and 350–351 (SV) contribute to the substrate site. 5 residues coordinate Mg(2+): alanine 353, glutamine 356, glycine 357, proline 358, and glycine 361.

Belongs to the cyclic amide hydrolase (CyAH) family. Homotetramer.

The enzyme catalyses barbiturate + H2O = 3-oxo-3-ureidopropanoate. The protein operates within pyrimidine metabolism; uracil degradation via oxidative pathway; malonate and urea from uracil: step 2/3. Its activity is regulated as follows. Inhibited by cyanuric acid. Responsible for the hydrolysis of barbituric acid (2,4,6-trihydroxy-1,3-pyrimidine), an intermediate in the oxidative catabolism of pyrimidines. Catalyzes the hydrolytic opening of the pyrimidine ring of barbituric acid to yield ureidomalonic acid. This chain is Barbiturase 1, found in Nocardioides sp. (strain ATCC BAA-499 / JS614).